The chain runs to 362 residues: Adenosine deaminase (362 aa).

Positions 19 and 21 each coordinate Zn(2+). Positions 21, 23, and 181 each coordinate substrate. His-208 is a Zn(2+) binding site. The Proton donor role is filled by Glu-211. Zn(2+) is bound at residue Asp-300.

This sequence belongs to the metallo-dependent hydrolases superfamily. Adenosine and AMP deaminases family. Adenosine deaminase subfamily. Zn(2+) is required as a cofactor.

The enzyme catalyses adenosine + H2O + H(+) = inosine + NH4(+). It catalyses the reaction 2'-deoxyadenosine + H2O + H(+) = 2'-deoxyinosine + NH4(+). Its function is as follows. Catalyzes the hydrolytic deamination of adenosine and 2-deoxyadenosine. This is Adenosine deaminase from Mycobacterium leprae (strain TN).